The following is a 346-amino-acid chain: Beta-ketoacyl-[acyl-carrier-protein] synthase III (346 aa).

Active-site residues include Cys120 and His256. Residues 257-261 (QANIR) form an ACP-binding region. Residue Asn286 is part of the active site.

Belongs to the thiolase-like superfamily. FabH family. In terms of assembly, homodimer.

Its subcellular location is the cytoplasm. The enzyme catalyses malonyl-[ACP] + acetyl-CoA + H(+) = 3-oxobutanoyl-[ACP] + CO2 + CoA. It functions in the pathway lipid metabolism; fatty acid biosynthesis. Functionally, catalyzes the condensation reaction of fatty acid synthesis by the addition to an acyl acceptor of two carbons from malonyl-ACP. Catalyzes the first condensation reaction which initiates fatty acid synthesis and may therefore play a role in governing the total rate of fatty acid production. Possesses both acetoacetyl-ACP synthase and acetyl transacylase activities. Its substrate specificity determines the biosynthesis of branched-chain and/or straight-chain of fatty acids. The polypeptide is Beta-ketoacyl-[acyl-carrier-protein] synthase III (Deinococcus geothermalis (strain DSM 11300 / CIP 105573 / AG-3a)).